Consider the following 280-residue polypeptide: MIQTLTDLSALRALVNGWKREGLRVALVPTMGNLHAGHYSLVMLARQYADRVVSSVFVNPTQFGPNEDFARYPRTPEADLRGLEDAGCDALWLPDVDTMYPLGTALATPIHAPGVSDVLEGECRPGHFDGVCTVVARLFNQVQPDVAAFGKKDYQQLAVIRQMVADLAFPIEILGGSIVREADGLAMSSRNQYLSAEDRPISATIRKVLLQMRDSYAAGTPRAQVEDAASQALEQAGFRVDYAVVRLPDLSEPGDSYTGARVALIAARLGNTRLIDNLEF.

31 to 38 (MGNLHAGH) contributes to the ATP binding site. The active-site Proton donor is the histidine 38. (R)-pantoate is bound at residue glutamine 62. Glutamine 62 lines the beta-alanine pocket. 150 to 153 (GKKD) serves as a coordination point for ATP. Glutamine 156 provides a ligand contact to (R)-pantoate. Residues valine 179 and 187 to 190 (MSSR) each bind ATP.

Belongs to the pantothenate synthetase family. As to quaternary structure, homodimer.

Its subcellular location is the cytoplasm. The enzyme catalyses (R)-pantoate + beta-alanine + ATP = (R)-pantothenate + AMP + diphosphate + H(+). It functions in the pathway cofactor biosynthesis; (R)-pantothenate biosynthesis; (R)-pantothenate from (R)-pantoate and beta-alanine: step 1/1. Its function is as follows. Catalyzes the condensation of pantoate with beta-alanine in an ATP-dependent reaction via a pantoyl-adenylate intermediate. This chain is Pantothenate synthetase, found in Xanthomonas euvesicatoria pv. vesicatoria (strain 85-10) (Xanthomonas campestris pv. vesicatoria).